A 748-amino-acid chain; its full sequence is Catalase-peroxidase (748 aa).

Positions 91 to 236 form a cross-link, tryptophyl-tyrosyl-methioninium (Trp-Tyr) (with M-262); sequence WHSAGTYRVG…LAAVQMGLIY (146 aa). His-92 serves as the catalytic Proton acceptor. The interval 201 to 223 is disordered; the sequence is AQPVADKAGHGKEHGRTDGGRNL. The segment covering 207–221 has biased composition (basic and acidic residues); the sequence is KAGHGKEHGRTDGGR. Residues 236 to 262 constitute a cross-link (tryptophyl-tyrosyl-methioninium (Tyr-Met) (with W-91)); the sequence is YVNPEGPDGNPDPQASAHDIRETFARM. Heme b is bound at residue His-277.

Belongs to the peroxidase family. Peroxidase/catalase subfamily. Homodimer or homotetramer. Heme b serves as cofactor. Formation of the three residue Trp-Tyr-Met cross-link is important for the catalase, but not the peroxidase activity of the enzyme.

It catalyses the reaction H2O2 + AH2 = A + 2 H2O. The enzyme catalyses 2 H2O2 = O2 + 2 H2O. In terms of biological role, bifunctional enzyme with both catalase and broad-spectrum peroxidase activity. This chain is Catalase-peroxidase, found in Bordetella avium (strain 197N).